The primary structure comprises 226 residues: dTTP/UTP pyrophosphatase (226 aa).

Asp-85 (proton acceptor) is an active-site residue.

This sequence belongs to the Maf family. YhdE subfamily. The cofactor is a divalent metal cation.

Its subcellular location is the cytoplasm. The catalysed reaction is dTTP + H2O = dTMP + diphosphate + H(+). It catalyses the reaction UTP + H2O = UMP + diphosphate + H(+). In terms of biological role, nucleoside triphosphate pyrophosphatase that hydrolyzes dTTP and UTP. May have a dual role in cell division arrest and in preventing the incorporation of modified nucleotides into cellular nucleic acids. This Psychrobacter cryohalolentis (strain ATCC BAA-1226 / DSM 17306 / VKM B-2378 / K5) protein is dTTP/UTP pyrophosphatase.